The sequence spans 159 residues: Phosphopantetheine adenylyltransferase (159 aa).

T10 is a substrate binding site. ATP is bound by residues 10–11 (TF) and H18. 3 residues coordinate substrate: K42, M74, and R88. ATP-binding positions include 89-91 (GLR), E99, and 124-130 (WSFISSS).

The protein belongs to the bacterial CoaD family. Homohexamer. The cofactor is Mg(2+).

It is found in the cytoplasm. The enzyme catalyses (R)-4'-phosphopantetheine + ATP + H(+) = 3'-dephospho-CoA + diphosphate. It functions in the pathway cofactor biosynthesis; coenzyme A biosynthesis; CoA from (R)-pantothenate: step 4/5. In terms of biological role, reversibly transfers an adenylyl group from ATP to 4'-phosphopantetheine, yielding dephospho-CoA (dPCoA) and pyrophosphate. This chain is Phosphopantetheine adenylyltransferase, found in Klebsiella pneumoniae subsp. pneumoniae (strain ATCC 700721 / MGH 78578).